Consider the following 282-residue polypeptide: Uracil-DNA glycosylase (282 aa).

The interval 15–40 is disordered; sequence SAASKRKSASNTENIPEKVPAGNENQ. The Proton acceptor role is filled by D123.

Belongs to the uracil-DNA glycosylase (UDG) superfamily. UNG family.

It is found in the mitochondrion. The protein localises to the nucleus. It catalyses the reaction Hydrolyzes single-stranded DNA or mismatched double-stranded DNA and polynucleotides, releasing free uracil.. Inhibited by UGI, a B.subtilis bacteriophage PBS2 peptide inhibitor. Excises uracil residues from the DNA which can arise as a result of misincorporation of dUMP residues by DNA polymerase or due to deamination of cytosine. The chain is Uracil-DNA glycosylase from Caenorhabditis elegans.